Here is a 252-residue protein sequence, read N- to C-terminus: 2-succinyl-6-hydroxy-2,4-cyclohexadiene-1-carboxylate synthase (252 aa).

The protein belongs to the AB hydrolase superfamily. MenH family. In terms of assembly, monomer.

It catalyses the reaction 5-enolpyruvoyl-6-hydroxy-2-succinyl-cyclohex-3-ene-1-carboxylate = (1R,6R)-6-hydroxy-2-succinyl-cyclohexa-2,4-diene-1-carboxylate + pyruvate. Its pathway is quinol/quinone metabolism; 1,4-dihydroxy-2-naphthoate biosynthesis; 1,4-dihydroxy-2-naphthoate from chorismate: step 3/7. The protein operates within quinol/quinone metabolism; menaquinone biosynthesis. In terms of biological role, catalyzes a proton abstraction reaction that results in 2,5-elimination of pyruvate from 2-succinyl-5-enolpyruvyl-6-hydroxy-3-cyclohexene-1-carboxylate (SEPHCHC) and the formation of 2-succinyl-6-hydroxy-2,4-cyclohexadiene-1-carboxylate (SHCHC). This chain is 2-succinyl-6-hydroxy-2,4-cyclohexadiene-1-carboxylate synthase, found in Salmonella heidelberg (strain SL476).